The primary structure comprises 197 residues: dTTP/UTP pyrophosphatase (197 aa).

Aspartate 70 functions as the Proton acceptor in the catalytic mechanism.

Belongs to the Maf family. YhdE subfamily. A divalent metal cation is required as a cofactor.

The protein resides in the cytoplasm. It carries out the reaction dTTP + H2O = dTMP + diphosphate + H(+). The catalysed reaction is UTP + H2O = UMP + diphosphate + H(+). Its function is as follows. Nucleoside triphosphate pyrophosphatase that hydrolyzes dTTP and UTP. May have a dual role in cell division arrest and in preventing the incorporation of modified nucleotides into cellular nucleic acids. This Yersinia pestis bv. Antiqua (strain Antiqua) protein is dTTP/UTP pyrophosphatase.